A 604-amino-acid polypeptide reads, in one-letter code: Aspartate--tRNA(Asp/Asn) ligase (604 aa).

Glu175 contacts L-aspartate. An aspartate region spans residues 199-202; the sequence is QQFK. 2 residues coordinate L-aspartate: Arg221 and His456. 221 to 223 provides a ligand contact to ATP; it reads RDE. Glu496 lines the ATP pocket. Arg503 contacts L-aspartate. 548–551 is a binding site for ATP; it reads GVDR.

Belongs to the class-II aminoacyl-tRNA synthetase family. Type 1 subfamily. As to quaternary structure, homodimer.

The protein resides in the cytoplasm. The catalysed reaction is tRNA(Asx) + L-aspartate + ATP = L-aspartyl-tRNA(Asx) + AMP + diphosphate. Its function is as follows. Aspartyl-tRNA synthetase with relaxed tRNA specificity since it is able to aspartylate not only its cognate tRNA(Asp) but also tRNA(Asn). Reaction proceeds in two steps: L-aspartate is first activated by ATP to form Asp-AMP and then transferred to the acceptor end of tRNA(Asp/Asn). The protein is Aspartate--tRNA(Asp/Asn) ligase of Methylorubrum populi (strain ATCC BAA-705 / NCIMB 13946 / BJ001) (Methylobacterium populi).